We begin with the raw amino-acid sequence, 594 residues long: Choline dehydrogenase, mitochondrial (594 aa).

The N-terminal 29 residues, 1–29 (MWCLLRGLGRPGALARGALGQQQSLGARA), are a transit peptide targeting the mitochondrion. 42–71 (SYVVVGAGSAGCVLAGRLTEDPAERVLLLE) is an FAD binding site. At lysine 436 the chain carries N6-succinyllysine. An N6-acetyllysine; alternate mark is found at lysine 484 and lysine 496. N6-succinyllysine; alternate is present on residues lysine 484 and lysine 496. Histidine 511 serves as the catalytic Proton acceptor. Residue lysine 580 is modified to N6-acetyllysine.

The protein belongs to the GMC oxidoreductase family. FAD serves as cofactor.

The protein resides in the mitochondrion inner membrane. It carries out the reaction choline + A = betaine aldehyde + AH2. Its pathway is amine and polyamine biosynthesis; betaine biosynthesis via choline pathway; betaine aldehyde from choline (cytochrome c reductase route): step 1/1. This chain is Choline dehydrogenase, mitochondrial (CHDH), found in Homo sapiens (Human).